Consider the following 225-residue polypeptide: MOB-like protein phocein (225 aa).

The Zn(2+) site is built by Cys-92, Cys-97, Cys-110, His-113, Cys-119, His-127, His-169, and His-174.

Belongs to the MOB1/phocein family. Binds STRN4. Interacts with DNM1 and EPS15. Interacts with nucleoside diphosphate kinase. Interacts with CTTNBP2. Interacts with CTTNBP2NL. Part of the core of STRIPAK complexes composed of PP2A catalytic and scaffolding subunits, the striatins (PP2A regulatory subunits), the striatin-associated proteins MOB4, STRIP1 and STRIP2, PDCD10 and members of the STE20 kinases, such as STK24 and STK26. In terms of processing, phosphorylated on serine residues. Highly expressed in adrenal gland, spinal cord, brain and cerebellum. Detected at lower levels in heart and skeletal muscle, and at very low levels in spleen, liver and intestine.

It localises to the cytoplasm. Its subcellular location is the membrane. The protein localises to the golgi apparatus. It is found in the golgi stack membrane. Part of the striatin-interacting phosphatase and kinase (STRIPAK) complexes. STRIPAK complexes have critical roles in protein (de)phosphorylation and are regulators of multiple signaling pathways including Hippo, MAPK, nuclear receptor and cytoskeleton remodeling. Different types of STRIPAK complexes are involved in a variety of biological processes such as cell growth, differentiation, apoptosis, metabolism and immune regulation. The sequence is that of MOB-like protein phocein (Mob4) from Rattus norvegicus (Rat).